Here is a 351-residue protein sequence, read N- to C-terminus: Foldase protein PrsA 1 (351 aa).

Positions 1-22 (MKNSNKLIASVVTLASVMALAA) are cleaved as a signal peptide. A lipid anchor (N-palmitoyl cysteine) is attached at C23. C23 carries S-diacylglycerol cysteine lipidation. The region spanning 145–240 (TPTMAVEMIT…KKFYIVKVTK (96 aa)) is the PpiC domain. 2 stretches are compositionally biased toward low complexity: residues 303–317 (KTKA…SESS) and 326–351 (ESEQ…PAAQ). Residues 303 to 351 (KTKAASESSTTSESSKAAEENPSESEQTQTSSAEEPTETEAQTQEPAAQ) form a disordered region.

It belongs to the PrsA family.

The protein resides in the cell membrane. It catalyses the reaction [protein]-peptidylproline (omega=180) = [protein]-peptidylproline (omega=0). Functionally, plays a major role in protein secretion by helping the post-translocational extracellular folding of several secreted proteins. The polypeptide is Foldase protein PrsA 1 (Streptococcus pyogenes serotype M6 (strain ATCC BAA-946 / MGAS10394)).